Here is a 92-residue protein sequence, read N- to C-terminus: UPF0297 protein TTE1249 (92 aa).

This sequence belongs to the UPF0297 family.

This chain is UPF0297 protein TTE1249, found in Caldanaerobacter subterraneus subsp. tengcongensis (strain DSM 15242 / JCM 11007 / NBRC 100824 / MB4) (Thermoanaerobacter tengcongensis).